A 147-amino-acid polypeptide reads, in one-letter code: Peptide methionine sulfoxide reductase MsrB (147 aa).

In terms of domain architecture, MsrB spans 8–131 (KEELKKVLTE…NSASLKFIPK (124 aa)). Cys120 (nucleophile) is an active-site residue.

Belongs to the MsrB Met sulfoxide reductase family.

It carries out the reaction L-methionyl-[protein] + [thioredoxin]-disulfide + H2O = L-methionyl-(R)-S-oxide-[protein] + [thioredoxin]-dithiol. In Clostridium perfringens (strain ATCC 13124 / DSM 756 / JCM 1290 / NCIMB 6125 / NCTC 8237 / Type A), this protein is Peptide methionine sulfoxide reductase MsrB.